We begin with the raw amino-acid sequence, 58 residues long: Small ribosomal subunit protein bS21C (58 aa).

The interval 38–58 (YEKPSLRRKRKAEAARKGGRY) is disordered. A compositionally biased stretch (basic and acidic residues) spans 49–58 (AEAARKGGRY).

It belongs to the bacterial ribosomal protein bS21 family.

This is Small ribosomal subunit protein bS21C (rpsU3) from Nostoc sp. (strain PCC 7120 / SAG 25.82 / UTEX 2576).